The sequence spans 194 residues: dITP/XTP pyrophosphatase (194 aa).

Position 9-14 (9-14 (THNPGK)) interacts with substrate. Asp40 and Asp69 together coordinate Mg(2+). Asp69 functions as the Proton acceptor in the catalytic mechanism. Substrate-binding positions include Ser70, 152–155 (FGYD), Lys175, and 180–181 (HR).

The protein belongs to the HAM1 NTPase family. As to quaternary structure, homodimer. Requires Mg(2+) as cofactor.

It carries out the reaction XTP + H2O = XMP + diphosphate + H(+). The enzyme catalyses dITP + H2O = dIMP + diphosphate + H(+). It catalyses the reaction ITP + H2O = IMP + diphosphate + H(+). Pyrophosphatase that catalyzes the hydrolysis of nucleoside triphosphates to their monophosphate derivatives, with a high preference for the non-canonical purine nucleotides XTP (xanthosine triphosphate), dITP (deoxyinosine triphosphate) and ITP. Seems to function as a house-cleaning enzyme that removes non-canonical purine nucleotides from the nucleotide pool, thus preventing their incorporation into DNA/RNA and avoiding chromosomal lesions. This Caulobacter vibrioides (strain ATCC 19089 / CIP 103742 / CB 15) (Caulobacter crescentus) protein is dITP/XTP pyrophosphatase.